The sequence spans 945 residues: Oxysterol-binding protein homolog C23H4.01c (945 aa).

A GOLD domain is found at 1-131; sequence METVEIRSKS…PKTVTFLLTA (131 aa). Residues 149 to 243 form the PH domain; the sequence is KQIISGTLLK…WCNALEKAKN (95 aa). Phosphoserine is present on residues Ser288, Ser419, and Ser421. Disordered stretches follow at residues 396-555 and 846-894; these read ESGA…LPHS and LEKD…MEEK. The segment covering 443-454 has biased composition (low complexity); that stretch reads TSSISDTSSNSS. Over residues 460–470 the composition is skewed to polar residues; the sequence is LNATSLASTVD. Over residues 482 to 499 the composition is skewed to basic and acidic residues; it reads ESNKENDIKRKQPFHDLM. The residue at position 503 (Ser503) is a Phosphoserine.

This sequence belongs to the OSBP family.

The protein resides in the cytoplasm. In Schizosaccharomyces pombe (strain 972 / ATCC 24843) (Fission yeast), this protein is Oxysterol-binding protein homolog C23H4.01c.